We begin with the raw amino-acid sequence, 283 residues long: ACT domain-containing protein DS12, chloroplastic (283 aa).

A chloroplast-targeting transit peptide spans M1–R56. The disordered stretch occupies residues S14–K78. Residues S48–V63 are compositionally biased toward low complexity. 2 ACT domains span residues I91 to Q171 and L206 to P276.

The protein resides in the plastid. It localises to the chloroplast. The protein is ACT domain-containing protein DS12, chloroplastic of Oryza sativa subsp. indica (Rice).